The chain runs to 372 residues: Glutamate 5-kinase (372 aa).

ATP is bound at residue Lys14. Substrate is bound by residues Ser54, Asp141, and Asn153. 173 to 174 (TD) is a binding site for ATP. The PUA domain occupies 280–358 (RGTLVLDDGA…DAIEALLGYV (79 aa)).

Belongs to the glutamate 5-kinase family.

The protein localises to the cytoplasm. The catalysed reaction is L-glutamate + ATP = L-glutamyl 5-phosphate + ADP. It participates in amino-acid biosynthesis; L-proline biosynthesis; L-glutamate 5-semialdehyde from L-glutamate: step 1/2. Catalyzes the transfer of a phosphate group to glutamate to form L-glutamate 5-phosphate. The polypeptide is Glutamate 5-kinase (Pseudomonas paraeruginosa (strain DSM 24068 / PA7) (Pseudomonas aeruginosa (strain PA7))).